Consider the following 425-residue polypeptide: Pectate lyase L (425 aa).

Positions 1–25 (MKYLNCFISTGLAAFFLVNSTSVLA) are cleaved as a signal peptide. Residues C28 and C114 are joined by a disulfide bond. Residues D209, D233, D234, and D237 each contribute to the Ca(2+) site. Residue K273 is the Proton acceptor of the active site. The Ca(2+) site is built by N402, S413, A416, D418, and E423.

Belongs to the polysaccharide lyase 9 family. Requires Ca(2+) as cofactor.

The protein localises to the secreted. The catalysed reaction is Eliminative cleavage of (1-&gt;4)-alpha-D-galacturonan to give oligosaccharides with 4-deoxy-alpha-D-galact-4-enuronosyl groups at their non-reducing ends.. It functions in the pathway glycan metabolism; pectin degradation; 2-dehydro-3-deoxy-D-gluconate from pectin: step 2/5. Presents an endo-cleaving activity on polygalacturonate or partially methylated pectin. Is effective in the maceration of plant tissue, and has an important role in soft-rot disease. Is 280-fold less active against polygalacturonate than the major pectate lyase PelB. When assayed on polygalacturonate, PelL releases oligogalacturonates of different sizes; upon prolonged incubation, PelL degrades the primary products to unsaturated tetramer and pentamer in addition to unsaturated dimer and trimer. When assayed on oligogalacturonates (degrees of polymerization of 2 to 8), it preferentially forms unsaturated tetramer, and displays the highest activity on the octamer. In Dickeya dadantii (strain 3937) (Erwinia chrysanthemi (strain 3937)), this protein is Pectate lyase L (pelL).